The chain runs to 382 residues: Queuine tRNA-ribosyltransferase (382 aa).

The active-site Proton acceptor is D93. Residues 93–97, D147, Q191, and G218 contribute to the substrate site; that span reads DSGGF. Residues 249–255 are RNA binding; that stretch reads GVGKPED. Residue D268 is the Nucleophile of the active site. The RNA binding; important for wobble base 34 recognition stretch occupies residues 273-277; sequence TRNAR. C306, C308, C311, and H337 together coordinate Zn(2+).

Belongs to the queuine tRNA-ribosyltransferase family. In terms of assembly, homodimer. Within each dimer, one monomer is responsible for RNA recognition and catalysis, while the other monomer binds to the replacement base PreQ1. The cofactor is Zn(2+).

It catalyses the reaction 7-aminomethyl-7-carbaguanine + guanosine(34) in tRNA = 7-aminomethyl-7-carbaguanosine(34) in tRNA + guanine. The protein operates within tRNA modification; tRNA-queuosine biosynthesis. Catalyzes the base-exchange of a guanine (G) residue with the queuine precursor 7-aminomethyl-7-deazaguanine (PreQ1) at position 34 (anticodon wobble position) in tRNAs with GU(N) anticodons (tRNA-Asp, -Asn, -His and -Tyr). Catalysis occurs through a double-displacement mechanism. The nucleophile active site attacks the C1' of nucleotide 34 to detach the guanine base from the RNA, forming a covalent enzyme-RNA intermediate. The proton acceptor active site deprotonates the incoming PreQ1, allowing a nucleophilic attack on the C1' of the ribose to form the product. After dissociation, two additional enzymatic reactions on the tRNA convert PreQ1 to queuine (Q), resulting in the hypermodified nucleoside queuosine (7-(((4,5-cis-dihydroxy-2-cyclopenten-1-yl)amino)methyl)-7-deazaguanosine). This chain is Queuine tRNA-ribosyltransferase, found in Haemophilus influenzae (strain PittEE).